Consider the following 489-residue polypeptide: MAKAVKKEIAKSEEVVSIKAPRKEPGKKIPVVSIVGRQNVGKSTLFNSLLKKKLAITEDYPGVTRDVLSARIYQEEKDLDFYLCDTPGLDIENPDSLSQTILETAYRQLRESDVIVFLLDKNLITTADHGLLNYLRREDKVANKPIIYCVNKADKELDEFDLEEFYRMGLSEVLPISAIGRKNLGLLLEKIQFFLKDKPGKVWIEKISASKKKEAQPLPLAEEDYEFRLAIVGKPNSGKSSLLNAICGYERAVVSDVAGTTRDSIDTLLEFGDRRLLLTDTAGIRKQSKTAEALEFYSYQRTIKAIESSDLVIHLLDAKKGFGDFDKKITSLLQEKGKPFLLAVNKWDSIEDKTDKTFKEYKEKLYSRFPLLNEVPIITISATERLRVQKLMDLSFDLASRSHRKVSTSELNKNLKNWMGLAGRSFSAHQPPKMLYCTQVSTSPFHLILFVNHVEYFKSNLVSFLKKKLTETYDLQGIPIRLEFRSDRK.

2 consecutive EngA-type G domains span residues P30–P199 and F227–H403. GTP-binding positions include G36–S43, D85–L89, N151–D154, G233–S240, D280–I284, and N345–D348. A KH-like domain is found at R404–R488.

It belongs to the TRAFAC class TrmE-Era-EngA-EngB-Septin-like GTPase superfamily. EngA (Der) GTPase family. Associates with the 50S ribosomal subunit.

GTPase that plays an essential role in the late steps of ribosome biogenesis. The protein is GTPase Der of Leptospira interrogans serogroup Icterohaemorrhagiae serovar Lai (strain 56601).